Consider the following 475-residue polypeptide: Chromosomal replication initiator protein DnaA (475 aa).

A domain I, interacts with DnaA modulators region spans residues 1–73 (MSDIEQERWS…LACWQAELPD (73 aa)). The interval 73 to 131 (DVHRIDLMVRSAMRCAAPAKEAPAADPRRPEHGDGRASTELKMVATAPASANHDALGGS) is domain II. The tract at residues 132–354 (PLDPRLTFAS…GAINRLLAHS (223 aa)) is domain III, AAA+ region. Residues G179, G181, K182, and T183 each coordinate ATP. A domain IV, binds dsDNA region spans residues 355–475 (KLNAQPVTLE…VELLKRQLQE (121 aa)).

This sequence belongs to the DnaA family. Oligomerizes as a right-handed, spiral filament on DNA at oriC.

It localises to the cytoplasm. Functionally, plays an essential role in the initiation and regulation of chromosomal replication. ATP-DnaA binds to the origin of replication (oriC) to initiate formation of the DNA replication initiation complex once per cell cycle. Binds the DnaA box (a 9 base pair repeat at the origin) and separates the double-stranded (ds)DNA. Forms a right-handed helical filament on oriC DNA; dsDNA binds to the exterior of the filament while single-stranded (ss)DNA is stabiized in the filament's interior. The ATP-DnaA-oriC complex binds and stabilizes one strand of the AT-rich DNA unwinding element (DUE), permitting loading of DNA polymerase. After initiation quickly degrades to an ADP-DnaA complex that is not apt for DNA replication. Binds acidic phospholipids. In Nitrobacter hamburgensis (strain DSM 10229 / NCIMB 13809 / X14), this protein is Chromosomal replication initiator protein DnaA.